The sequence spans 295 residues: 4-hydroxy-tetrahydrodipicolinate synthase (295 aa).

T47 contacts pyruvate. The active-site Proton donor/acceptor is Y135. Residue K163 is the Schiff-base intermediate with substrate of the active site. A pyruvate-binding site is contributed by I206.

This sequence belongs to the DapA family. In terms of assembly, homodimer.

It localises to the cytoplasm. It carries out the reaction L-aspartate 4-semialdehyde + pyruvate = (2S,4S)-4-hydroxy-2,3,4,5-tetrahydrodipicolinate + H2O + H(+). Its pathway is amino-acid biosynthesis; L-lysine biosynthesis via DAP pathway; (S)-tetrahydrodipicolinate from L-aspartate: step 3/4. Functionally, catalyzes the condensation of (S)-aspartate-beta-semialdehyde [(S)-ASA] and pyruvate to 4-hydroxy-tetrahydrodipicolinate (HTPA). The sequence is that of 4-hydroxy-tetrahydrodipicolinate synthase from Staphylococcus aureus (strain bovine RF122 / ET3-1).